We begin with the raw amino-acid sequence, 488 residues long: MSSPSLVELKAILRLAGPLIAAQLAYVAMVFTDTVMMGKLGPDALAAGGLGAVSYAFVSTFCVGVVAAVGNLVAIRHGCDDAAGAAAAARSGLWVGAALALAAGLLLWNLRPLLLVFGQAPQTVDGAMQFLHSLTFALPGYMAFMVLRGFTSAIDRAGPVMAISVLGALANLALNYSFIEGLFGLPRLGLAGIGLVTALVMNCMPLLLALYIRLQPAYAEYSLLRGLGRPQRAMVEEILRLGLPIGGTYAVESGMFTVATLCMGIIGDHALAAHQIAIQAVYVAFMVPVGLSYATTYRIGQHFGAGRLLEARRAGRVGIGFGALCMLLFAGLFWWMPEAIIGLFLDRDAPANREVAAMAVSLLAIAAWFELFDGTQNVAMGAIRGLKDARTTFLVGLACYWLVGVPLACLLAFAAGWGAAGVWWGLAGGLACAAIGLTLAFEWKTARLLPKATASEASALNCRAAGRGAPSARLCPGNAPVPPTAAAD.

The next 12 membrane-spanning stretches (helical) occupy residues 11–31 (AILR…AMVF), 55–75 (YAFV…LVAI), 97–117 (AALA…LLVF), 127–147 (AMQF…FMVL), 159–179 (PVMA…YSFI), 190–210 (LAGI…LLAL), 247–267 (GTYA…GIIG), 271–291 (LAAH…PVGL), 317–337 (VGIG…WWMP), 355–375 (VAAM…FDGT), 393–413 (FLVG…LLAF), and 421–441 (GVWW…TLAF).

Belongs to the multi antimicrobial extrusion (MATE) (TC 2.A.66.1) family.

Its subcellular location is the cell inner membrane. Multidrug efflux pump. The protein is Probable multidrug resistance protein NorM (norM) of Pseudomonas aeruginosa (strain ATCC 15692 / DSM 22644 / CIP 104116 / JCM 14847 / LMG 12228 / 1C / PRS 101 / PAO1).